The sequence spans 219 residues: Ribosome maturation factor RimP (219 aa).

A disordered region spans residues 195-219; that stretch reads EGRIPGDDLGAEPEDVASTETQEKK.

Belongs to the RimP family.

Its subcellular location is the cytoplasm. In terms of biological role, required for maturation of 30S ribosomal subunits. The chain is Ribosome maturation factor RimP from Brucella abortus (strain S19).